We begin with the raw amino-acid sequence, 460 residues long: GTPase Der (460 aa).

EngA-type G domains follow at residues Gln-2–Phe-164 and Ile-196–Thr-368. Residues Gly-8–Ser-15, Asp-55–Leu-59, Asn-116–Asp-119, Gly-202–Ser-209, Asp-249–Ile-253, and Asn-313–Asp-316 contribute to the GTP site. Positions Gln-369–Gly-453 constitute a KH-like domain.

Belongs to the TRAFAC class TrmE-Era-EngA-EngB-Septin-like GTPase superfamily. EngA (Der) GTPase family. Associates with the 50S ribosomal subunit.

Functionally, GTPase that plays an essential role in the late steps of ribosome biogenesis. The sequence is that of GTPase Der from Campylobacter jejuni subsp. jejuni serotype O:2 (strain ATCC 700819 / NCTC 11168).